We begin with the raw amino-acid sequence, 255 residues long: Protein patched homolog 2 (255 aa).

The Extracellular portion of the chain corresponds to 1–197 (SLLQGGSAYL…LNDIMKSFSD (197 aa)). N-linked (GlcNAc...) asparagine glycans are attached at residues Asn-147 and Asn-175. Residues 198–218 (VSVIRVAGGYLLMLAYACVTM) traverse the membrane as a helical segment. Positions 199-255 (SVIRVAGGYLLMLAYACVTMLRWDCTKSQGAVGLAGVLLVALSVASGLGLCSLLGIS) constitute an SSD domain. Over 219–227 (LRWDCTKSQ) the chain is Cytoplasmic. The chain crosses the membrane as a helical span at residues 228 to 248 (GAVGLAGVLLVALSVASGLGL). Topologically, residues 249 to 255 (CSLLGIS) are extracellular.

Belongs to the patched family. As to expression, in the eye, detected in neural retina, iris, retinal pigment epithelium, but not in lens.

It localises to the membrane. Functionally, may act as a receptor for sonic hedgehog (SHH). This is Protein patched homolog 2 (PTC2) from Cynops pyrrhogaster (Japanese fire-bellied newt).